Here is a 648-residue protein sequence, read N- to C-terminus: Chaperone protein HtpG (648 aa).

The segment at 1–353 (MNARVEQLEF…AQDMSLNVSR (353 aa)) is a; substrate-binding. The b stretch occupies residues 354–567 (EILQQDRQIK…TFGITPALAR (214 aa)). Positions 568-648 (IYRATGQDVP…LLADRLTRTL (81 aa)) are c.

The protein belongs to the heat shock protein 90 family. In terms of assembly, homodimer.

Its subcellular location is the cytoplasm. Molecular chaperone. Has ATPase activity. The chain is Chaperone protein HtpG from Mycobacterium ulcerans (strain Agy99).